The primary structure comprises 358 residues: DNA-directed RNA polymerase subunit alpha (358 aa).

An alpha N-terminal domain (alpha-NTD) region spans residues 1-231 (MIQNVTDDKI…NIFLSLSNSS (231 aa)). The alpha C-terminal domain (alpha-CTD) stretch occupies residues 266–358 (QESLGWKKIS…LELINNKDIS (93 aa)).

It belongs to the RNA polymerase alpha chain family. In plastids the minimal PEP RNA polymerase catalytic core is composed of four subunits: alpha, beta, beta', and beta''. When a (nuclear-encoded) sigma factor is associated with the core the holoenzyme is formed, which can initiate transcription.

It localises to the plastid. Its subcellular location is the chloroplast. It carries out the reaction RNA(n) + a ribonucleoside 5'-triphosphate = RNA(n+1) + diphosphate. Functionally, DNA-dependent RNA polymerase catalyzes the transcription of DNA into RNA using the four ribonucleoside triphosphates as substrates. In Chara vulgaris (Common stonewort), this protein is DNA-directed RNA polymerase subunit alpha.